The primary structure comprises 52 residues: EGEECESGPCCRNCKFLKEGTICKRARGDDMDDYCNGKTCDCPRNPHKGPAT.

The 50-residue stretch at 1–50 (EGEECESGPCCRNCKFLKEGTICKRARGDDMDDYCNGKTCDCPRNPHKGP) folds into the Disintegrin domain. Intrachain disulfides connect Cys5–Cys14, Cys10–Cys35, Cys11–Cys40, and Cys23–Cys42. Residues 27-29 (RGD) carry the Cell attachment site motif.

The protein belongs to the venom metalloproteinase (M12B) family. P-II subfamily. P-IIa sub-subfamily. As to quaternary structure, monomer. Expressed by the venom gland.

The protein resides in the secreted. In terms of biological role, inhibits ADP-induced human, canine and rabbit platelet aggregation by binding with high affinity to alpha-IIb/beta-3 (ITGA2B/ITGB3). In Echis multisquamatus (Central Asian sand viper), this protein is Disintegrin multisquamatin.